A 256-amino-acid polypeptide reads, in one-letter code: Transcription factor CAULIFLOWER (256 aa).

Positions 1–61 (MGRGRVQLKR…GKLFEYTSES (61 aa)) constitute an MADS-box domain. The K-box domain maps to 90–180 (QPNWSMEYSR…TKQIKERENI (91 aa)).

Homodimer capable of binding to CArG-box sequences.

The protein resides in the nucleus. Probable transcription factor that promotes early floral meristem identity in synergy with APETALA1, FRUITFULL and LEAFY. Is required subsequently for the transition of an inflorescence meristem into a floral meristem. Seems to be partially redundant to the function of APETALA1. The protein is Transcription factor CAULIFLOWER (CAL) of Arabidopsis lyrata subsp. lyrata (Lyre-leaved rock-cress).